The following is a 92-amino-acid chain: Protamine-2 (92 aa).

The segment at 1 to 76 (MVRCRVRSPS…RRACRHRRHR (76 aa)) is disordered. Residues 7-20 (RSPSESPQQGSGQQ) are compositionally biased toward low complexity. Phosphoserine occurs at positions 8 and 10. Positions 21–36 (RENERQDQDQELRPED) are enriched in basic and acidic residues. Over residues 42–76 (RTHRGRYHYRHRSHTRRRRSCRRRRRRACRHRRHR) the composition is skewed to basic residues.

It belongs to the protamine P2 family. As to quaternary structure, interacts with TDRP. In terms of processing, proteolytic processing into mature chains is required for histone eviction during spermatogenesis. Transition proteins (TNP1 and TNP2) are required for processing. Testis.

It is found in the nucleus. It localises to the chromosome. Functionally, protamines substitute for histones in the chromatin of sperm during the haploid phase of spermatogenesis. They compact sperm DNA into a highly condensed, stable and inactive complex. In Sus scrofa (Pig), this protein is Protamine-2 (PRM2).